The chain runs to 305 residues: Dihydroorotate dehydrogenase B (NAD(+)), catalytic subunit (305 aa).

FMN-binding positions include S20 and K44 to G45. Substrate contacts are provided by residues K44 and N68–I72. Residues N98 and N126 each coordinate FMN. A substrate-binding site is contributed by N126. C129 (nucleophile) is an active-site residue. Positions 165 and 191 each coordinate FMN. N192–T193 is a substrate binding site. FMN is bound by residues G217, G243 to G244, and G265 to T266.

The protein belongs to the dihydroorotate dehydrogenase family. Type 1 subfamily. As to quaternary structure, heterotetramer of 2 PyrK and 2 PyrD type B subunits. FMN serves as cofactor.

Its subcellular location is the cytoplasm. It carries out the reaction (S)-dihydroorotate + NAD(+) = orotate + NADH + H(+). Its pathway is pyrimidine metabolism; UMP biosynthesis via de novo pathway; orotate from (S)-dihydroorotate (NAD(+) route): step 1/1. Functionally, catalyzes the conversion of dihydroorotate to orotate with NAD(+) as electron acceptor. In Maridesulfovibrio salexigens (strain ATCC 14822 / DSM 2638 / NCIMB 8403 / VKM B-1763) (Desulfovibrio salexigens), this protein is Dihydroorotate dehydrogenase B (NAD(+)), catalytic subunit (pyrD).